The following is a 213-amino-acid chain: Phosphatidylserine decarboxylase proenzyme (213 aa).

Catalysis depends on serine 183, which acts as the Schiff-base intermediate with substrate; via pyruvic acid. Position 183 is a pyruvic acid (Ser); by autocatalysis (serine 183).

It belongs to the phosphatidylserine decarboxylase family. PSD-A subfamily. As to quaternary structure, heterodimer of a large membrane-associated beta subunit and a small pyruvoyl-containing alpha subunit. The cofactor is pyruvate. In terms of processing, is synthesized initially as an inactive proenzyme. Formation of the active enzyme involves a self-maturation process in which the active site pyruvoyl group is generated from an internal serine residue via an autocatalytic post-translational modification. Two non-identical subunits are generated from the proenzyme in this reaction, and the pyruvate is formed at the N-terminus of the alpha chain, which is derived from the carboxyl end of the proenzyme. The post-translation cleavage follows an unusual pathway, termed non-hydrolytic serinolysis, in which the side chain hydroxyl group of the serine supplies its oxygen atom to form the C-terminus of the beta chain, while the remainder of the serine residue undergoes an oxidative deamination to produce ammonia and the pyruvoyl prosthetic group on the alpha chain.

Its subcellular location is the cell membrane. It catalyses the reaction a 1,2-diacyl-sn-glycero-3-phospho-L-serine + H(+) = a 1,2-diacyl-sn-glycero-3-phosphoethanolamine + CO2. It participates in phospholipid metabolism; phosphatidylethanolamine biosynthesis; phosphatidylethanolamine from CDP-diacylglycerol: step 2/2. In terms of biological role, catalyzes the formation of phosphatidylethanolamine (PtdEtn) from phosphatidylserine (PtdSer). This chain is Phosphatidylserine decarboxylase proenzyme, found in Syntrophus aciditrophicus (strain SB).